The sequence spans 200 residues: MNQHQVMALAAMCQVAKQVQKVAQYGNNNEHDLEILLSSIIQTSPASPEDVYQGTDNLRDGYKTLLAQLSAGAQKDVEIVKYVGGLMQLERALSANDKSLNELGKRIDDIHRRLDHFAITDESVVAGLADIYSTVLSPLGHRIQVYGKPELLKQQLTQNKIRALLLAGIRSAVLWRQMGGKRRHFFFAKRKIIAIAKAKI.

This sequence belongs to the HflD family.

It localises to the cytoplasm. The protein resides in the cell inner membrane. In Pseudoalteromonas translucida (strain TAC 125), this protein is High frequency lysogenization protein HflD homolog.